The following is a 227-amino-acid chain: PKHD-type hydroxylase Bpro_3048 (227 aa).

In terms of domain architecture, Fe2OG dioxygenase spans 78–179 (KIFTPRINRY…RLACFFWVES (102 aa)). Histidine 97, aspartate 99, and histidine 160 together coordinate Fe cation. Position 170 (arginine 170) interacts with 2-oxoglutarate.

It depends on Fe(2+) as a cofactor. The cofactor is L-ascorbate.

The protein is PKHD-type hydroxylase Bpro_3048 of Polaromonas sp. (strain JS666 / ATCC BAA-500).